The chain runs to 358 residues: Cytoplasmic dynein 2 light intermediate chain 1 (358 aa).

Disordered regions lie at residues 1–35 (MPKVSSDTLWDIAAAEVRSRESRTDEEEAEEEDAH) and 307–358 (ESTR…ALDP). Over residues 24–33 (TDEEEAEEED) the composition is skewed to acidic residues. 2 stretches are compositionally biased toward basic and acidic residues: residues 307–320 (ESTRERKELKDPVK) and 333–349 (RAQKDQELDQYKREQAK).

It belongs to the dynein light intermediate chain family. Light intermediate chain of the cytoplasmic dynein complex 2, a multisubunit complex composed at least of eleven different proteins. The cytoplasmic dynein 2 complex consists of two catalytic heavy chains (HCs) and a number of non-catalytic subunits presented by intermediate chains (ICs), light intermediate chains (LICs) and light chains (LCs). Among them, a heavy chain (DYNC2H1), two intermediate chains (DYNC2I2 and DYNC2I1), a light intermediate chain (DYNC2LI1), and a light chain (DYNLT2B) are unique to the dynein-2 complex, but a subset of light chains are also shared by dynein-1 and dynein-2 complexes. Dynein-2 complex is built around two copies of cytoplasmic dynein 2 heavy chain 1 (DYNC2H1). The C-terminal region forms the motor domain, which converts the energy from ATP hydrolysis into movement. Its N-terminal region forms the tail, an extended structure that binds the other subunits and holds the two heavy chains in a homodimer.

Its subcellular location is the cytoplasm. It is found in the cell projection. It localises to the cilium. The protein localises to the cytoskeleton. The protein resides in the cilium basal body. Its subcellular location is the cilium axoneme. It is found in the microtubule organizing center. It localises to the centrosome. In terms of biological role, acts as one of several non-catalytic accessory components of the cytoplasmic dynein 2 complex (dynein-2 complex), a motor protein complex that drives the movement of cargos along microtubules within cilia and flagella in concert with the intraflagellar transport (IFT) system, facilitating the assembly of these organelles. This chain is Cytoplasmic dynein 2 light intermediate chain 1 (dync2li1), found in Danio rerio (Zebrafish).